The primary structure comprises 139 residues: Aspartate 1-decarboxylase (139 aa).

The Schiff-base intermediate with substrate; via pyruvic acid role is filled by S25. S25 carries the post-translational modification Pyruvic acid (Ser). T57 contributes to the substrate binding site. The active-site Proton donor is the Y58. Position 73–75 (73–75 (GAA)) interacts with substrate. The tract at residues 116–139 (ELGEDPAHAPAGSGLKDPRHPEGE) is disordered.

The protein belongs to the PanD family. As to quaternary structure, heterooctamer of four alpha and four beta subunits. It depends on pyruvate as a cofactor. Is synthesized initially as an inactive proenzyme, which is activated by self-cleavage at a specific serine bond to produce a beta-subunit with a hydroxyl group at its C-terminus and an alpha-subunit with a pyruvoyl group at its N-terminus.

The protein resides in the cytoplasm. The enzyme catalyses L-aspartate + H(+) = beta-alanine + CO2. Its pathway is cofactor biosynthesis; (R)-pantothenate biosynthesis; beta-alanine from L-aspartate: step 1/1. Catalyzes the pyruvoyl-dependent decarboxylation of aspartate to produce beta-alanine. The protein is Aspartate 1-decarboxylase of Corynebacterium urealyticum (strain ATCC 43042 / DSM 7109).